The chain runs to 436 residues: Histone acetyltransferase RTT109 (436 aa).

The Rtt109-type HAT domain maps to 2–404 (SLNDFLSSVL…LQSLTGKREH (403 aa)). Acetyl-CoA-binding positions include 88–90 (ADT) and 97–101 (RVSVR). Residues 128–170 (RSYKKISPELISAASTPARTLRILARRLKQSGSTVLKEIESPR) are interaction with VPS75. Acetyl-CoA-binding positions include phenylalanine 192, alanine 196, 211–213 (HIL), and tryptophan 221. The active-site Proton donor/acceptor is aspartate 288. Lysine 290 carries the post-translational modification N6-acetyllysine; by autocatalysis. An interaction with ASF1 region spans residues 419–433 (LAITMLKPRKKAKAL).

It belongs to the RTT109 family. In terms of assembly, forms a complex composed of two RTT109 subunits and one VPS75 homodimer; each RTT109 subunit interacts predominantly with VPS75 instead of interacting with the other RTT109 subunit. Interacts with VPS75; the interaction is direct. Interacts (via C-terminus) with ASF1; the interaction is direct. Interacts with histone H3/H4 heterodimers via histone H3.

The protein localises to the nucleus. The enzyme catalyses L-lysyl-[histone] + acetyl-CoA = N(6)-acetyl-L-lysyl-[histone] + CoA + H(+). It catalyses the reaction L-lysyl-[protein] + acetyl-CoA = N(6)-acetyl-L-lysyl-[protein] + CoA + H(+). Histone chaperone-dependent acetylase that modifies 'Lys-9', 'Lys-14', 'Lys-23', 'Lys-27', and 'Lys-56' on histone H3 (H3K9Ac, H3K14Ac and H3K23Ac, H3K27Ac, and H3K56Ac) to promote nucleosome assembly, genomic stability, DNA repair and transcriptional regulation during mitotic S-phase. Its residue selectivity is influenced by the acetylation status of histone H3, and also the presence of histone chaperone ASF1 that shifts selectivity to 'Lys-56' when H3K14Ac is already present. H3K56 acetylation weakens the interaction between the histone core and the surrounding DNA in the nucleosomal particle and drives chromatin disassembly. Autoacetylates. Independently of acetyltransferase activity, stimulates histone deposition by VPS75. Involved in regulation of Ty1 transposition. This is Histone acetyltransferase RTT109 from Saccharomyces cerevisiae (strain ATCC 204508 / S288c) (Baker's yeast).